We begin with the raw amino-acid sequence, 185 residues long: Ribosome-recycling factor (185 aa).

The protein belongs to the RRF family.

Its subcellular location is the cytoplasm. Functionally, responsible for the release of ribosomes from messenger RNA at the termination of protein biosynthesis. May increase the efficiency of translation by recycling ribosomes from one round of translation to another. The polypeptide is Ribosome-recycling factor (Geobacter sulfurreducens (strain ATCC 51573 / DSM 12127 / PCA)).